The chain runs to 494 residues: Truncated non-functional calcium-binding mitochondrial carrier SAL1-1 (494 aa).

Residues 11–46 (QRDIRYACLFKELDVKGNGQVTLDNLISAFEKNDHP) form the EF-hand 1 domain. Ca(2+) is bound by residues Lys-65, Asp-70, Asp-93, Asp-95, Asp-97, Lys-99, and Glu-104. EF-hand domains lie at 80 to 115 (NAESQIWNGFQRIDLDHDGKIGINEINRYLSDLDNQ), 120 to 155 (NELNHELSNEKVNKFSRFFEWAFPKRKANIALRGQA), and 156 to 191 (SHKKNTDNDRSKKTTDSDLYVTYDQWRDFLLLVPRK). Ca(2+) is bound by residues Thr-161 and Ser-166. 2 Solcar repeats span residues 225–332 (IRGF…TKKI) and 345–434 (LSKF…LKKM). Transmembrane regions (helical) follow at residues 231–248 (FIAGGISGVISRTCTAPF), 307–326 (GNGLNVIKVFPESSIKFGSF), 355–368 (GLAGMAAQFSVYPI), 409–428 (RCHSRYSGHISLCCIRFGDF), and 458–475 (TSNGCIQWNCRSFCCLSN). One copy of the Solcar 3; truncated repeat lies at 452 to 494 (SKQPGCTSNGCIQWNCRSFCCLSNQSFKNKTTSPRNICTSLCV).

This sequence belongs to the mitochondrial carrier (TC 2.A.29) family.

The protein localises to the mitochondrion inner membrane. Calcium-dependent mitochondrial solute carrier. This Saccharomyces cerevisiae (strain ATCC 204508 / S288c) (Baker's yeast) protein is Truncated non-functional calcium-binding mitochondrial carrier SAL1-1 (SAL1).